A 176-amino-acid polypeptide reads, in one-letter code: WASH complex subunit 3 (176 aa).

Residues 47–74 (ETKFVEMERQLQKTEAALIILEAKLASI) adopt a coiled-coil conformation. Disordered stretches follow at residues 84–123 (ATEA…PESV) and 152–176 (KMQS…GQRE). Over residues 104 to 115 (TTEPPTTENPTE) the composition is skewed to low complexity.

The protein belongs to the CCDC53 family. Component of the WASH complex.

The protein resides in the early endosome. Its function is as follows. Acts at least in part as component of the WASH complex which may regulate wash nucleation-promoting factor (NPF) activity and is required for its membrane targeting during endosomal sorting. During embryogenesis, not involved in the wash-dependent developmental migration of hemocytes anteriorly from the tail. The chain is WASH complex subunit 3 from Drosophila melanogaster (Fruit fly).